The sequence spans 339 residues: Ketol-acid reductoisomerase (NADP(+)) (339 aa).

The 182-residue stretch at 1–182 (MRVYYDRDAD…GGGRSGIIET (182 aa)) folds into the KARI N-terminal Rossmann domain. Residues 24–27 (YGSQ), K48, S51, T53, and 83–86 (DELQ) each bind NADP(+). H108 is an active-site residue. Position 134 (G134) interacts with NADP(+). Positions 183–328 (NFKEECETDL…AKLRGMMPWI (146 aa)) constitute a KARI C-terminal knotted domain. Residues D191, E195, E227, and E231 each coordinate Mg(2+). S252 serves as a coordination point for substrate.

This sequence belongs to the ketol-acid reductoisomerase family. The cofactor is Mg(2+).

It carries out the reaction (2R)-2,3-dihydroxy-3-methylbutanoate + NADP(+) = (2S)-2-acetolactate + NADPH + H(+). The catalysed reaction is (2R,3R)-2,3-dihydroxy-3-methylpentanoate + NADP(+) = (S)-2-ethyl-2-hydroxy-3-oxobutanoate + NADPH + H(+). It functions in the pathway amino-acid biosynthesis; L-isoleucine biosynthesis; L-isoleucine from 2-oxobutanoate: step 2/4. Its pathway is amino-acid biosynthesis; L-valine biosynthesis; L-valine from pyruvate: step 2/4. Involved in the biosynthesis of branched-chain amino acids (BCAA). Catalyzes an alkyl-migration followed by a ketol-acid reduction of (S)-2-acetolactate (S2AL) to yield (R)-2,3-dihydroxy-isovalerate. In the isomerase reaction, S2AL is rearranged via a Mg-dependent methyl migration to produce 3-hydroxy-3-methyl-2-ketobutyrate (HMKB). In the reductase reaction, this 2-ketoacid undergoes a metal-dependent reduction by NADPH to yield (R)-2,3-dihydroxy-isovalerate. This chain is Ketol-acid reductoisomerase (NADP(+)), found in Agrobacterium fabrum (strain C58 / ATCC 33970) (Agrobacterium tumefaciens (strain C58)).